The sequence spans 430 residues: Glutamyl-tRNA reductase (430 aa).

Substrate is bound by residues 49-52 (TCNR), Ser109, 114-116 (EGQ), and Gln120. Cys50 (nucleophile) is an active-site residue. Residue 189 to 194 (GAGKMA) coordinates NADP(+).

The protein belongs to the glutamyl-tRNA reductase family. Homodimer.

It carries out the reaction (S)-4-amino-5-oxopentanoate + tRNA(Glu) + NADP(+) = L-glutamyl-tRNA(Glu) + NADPH + H(+). It participates in porphyrin-containing compound metabolism; protoporphyrin-IX biosynthesis; 5-aminolevulinate from L-glutamyl-tRNA(Glu): step 1/2. It functions in the pathway porphyrin-containing compound metabolism; chlorophyll biosynthesis. Catalyzes the NADPH-dependent reduction of glutamyl-tRNA(Glu) to glutamate 1-semialdehyde (GSA). The chain is Glutamyl-tRNA reductase from Crocosphaera subtropica (strain ATCC 51142 / BH68) (Cyanothece sp. (strain ATCC 51142)).